We begin with the raw amino-acid sequence, 1805 residues long: Obscurin-like protein 1 (1805 aa).

Position 10 is a phosphoserine (Ser-10). The Ig-like 1 domain maps to 12-100 (PCFLRFPRPV…GEAYAAAAVT (89 aa)). The tract at residues 17–19 (FPR) is interaction with TTN. A disulfide bridge connects residues Cys-33 and Cys-84. The segment at 85-94 (RARNAAGEAY) is interaction with TTN. A compositionally biased stretch (pro residues) spans 104–122 (PPAPEPEPQSSECPPPPPG). The tract at residues 104 to 131 (PPAPEPEPQSSECPPPPPGTGEGAPVFL) is disordered. 3 Ig-like domains span residues 128 to 225 (PVFL…ALLQ), 240 to 330 (PPVR…QTLS), and 339 to 425 (PRLR…ANVT). 3 disulfide bridges follow: Cys-149/Cys-209, Cys-267/Cys-319, and Cys-362/Cys-412. In terms of domain architecture, Fibronectin type-III spans 517 to 615 (PPGPPVLVEM…FNGSAHLVPT (99 aa)). Ig-like domains are found at residues 720–800 (PQDK…FSVT), 804–891 (PPVH…FTVT), 902–982 (PNGK…FTIT), 986–1075 (PPVR…VTVT), 1078–1165 (PERI…FNVS), 1176–1261 (PEAV…FNVQ), 1266–1351 (PPVK…ARLH), 1355–1442 (TELL…ARLS), 1536–1628 (PVTI…REVS), and 1702–1798 (PAQS…ADTQ). Disulfide bonds link Cys-738–Cys-788, Cys-829–Cys-879, Cys-920–Cys-970, Cys-1011–Cys-1061, Cys-1103–Cys-1153, and Cys-1195–Cys-1245. Cys-1558 and Cys-1608 are oxidised to a cystine.

In terms of assembly, component of the 3M complex, composed of core components CUL7, CCDC8 and OBSL1. Interacts with CCDC8. Interacts with CUL7; the interaction is direct. Interacts with FBXW8. Interacts (via N-terminal Ig-like domain) with TTN/titin (via C-terminal Ig-like domain); the interaction is direct. As to expression, expressed in granule neurons, with levels decreasing with neuronal maturation.

The protein localises to the cytoplasm. The protein resides in the perinuclear region. It is found in the golgi apparatus. In terms of biological role, core component of the 3M complex, a complex required to regulate microtubule dynamics and genome integrity. It is unclear how the 3M complex regulates microtubules, it could act by controlling the level of a microtubule stabilizer. Acts as a regulator of the Cul7-RING(FBXW8) ubiquitin-protein ligase, playing a critical role in the ubiquitin ligase pathway that regulates Golgi morphogenesis and dendrite patterning in brain. Required to localize CUL7 to the Golgi apparatus in neurons. This Rattus norvegicus (Rat) protein is Obscurin-like protein 1 (Obsl1).